The chain runs to 341 residues: Phenylalanine--tRNA ligase alpha subunit (341 aa).

Mg(2+) is bound at residue glutamate 256.

The protein belongs to the class-II aminoacyl-tRNA synthetase family. Phe-tRNA synthetase alpha subunit type 1 subfamily. In terms of assembly, tetramer of two alpha and two beta subunits. The cofactor is Mg(2+).

The protein resides in the cytoplasm. It carries out the reaction tRNA(Phe) + L-phenylalanine + ATP = L-phenylalanyl-tRNA(Phe) + AMP + diphosphate + H(+). This is Phenylalanine--tRNA ligase alpha subunit from Chlamydia felis (strain Fe/C-56) (Chlamydophila felis).